Consider the following 93-residue polypeptide: Acylphosphatase (93 aa).

In terms of domain architecture, Acylphosphatase-like spans 6–93 (RLVAWVRGQV…RGGYEGFAIR (88 aa)). Catalysis depends on residues R21 and N40.

This sequence belongs to the acylphosphatase family.

It catalyses the reaction an acyl phosphate + H2O = a carboxylate + phosphate + H(+). The protein is Acylphosphatase (acyP) of Streptomyces coelicolor (strain ATCC BAA-471 / A3(2) / M145).